The following is a 384-amino-acid chain: 1-deoxy-D-xylulose 5-phosphate reductoisomerase (384 aa).

NADPH contacts are provided by Thr10, Gly11, Ser12, Ile13, Lys37, and Asn124. Position 125 (Lys125) interacts with 1-deoxy-D-xylulose 5-phosphate. Residue Glu126 participates in NADPH binding. Asp150 contacts Mn(2+). 4 residues coordinate 1-deoxy-D-xylulose 5-phosphate: Ser151, Glu152, Ser176, and His199. Glu152 is a Mn(2+) binding site. Gly205 contacts NADPH. 1-deoxy-D-xylulose 5-phosphate-binding residues include Ser212, Asn217, Lys218, and Glu221. Mn(2+) is bound at residue Glu221.

Belongs to the DXR family. It depends on Mg(2+) as a cofactor. Mn(2+) is required as a cofactor.

The enzyme catalyses 2-C-methyl-D-erythritol 4-phosphate + NADP(+) = 1-deoxy-D-xylulose 5-phosphate + NADPH + H(+). Its pathway is isoprenoid biosynthesis; isopentenyl diphosphate biosynthesis via DXP pathway; isopentenyl diphosphate from 1-deoxy-D-xylulose 5-phosphate: step 1/6. Its function is as follows. Catalyzes the NADPH-dependent rearrangement and reduction of 1-deoxy-D-xylulose-5-phosphate (DXP) to 2-C-methyl-D-erythritol 4-phosphate (MEP). The sequence is that of 1-deoxy-D-xylulose 5-phosphate reductoisomerase from Clostridium tetani (strain Massachusetts / E88).